Consider the following 219-residue polypeptide: Small ribosomal subunit protein uS3 (219 aa).

The KH type-2 domain occupies 38-107 (IREYIENKMK…RVHINVVEVK (70 aa)).

This sequence belongs to the universal ribosomal protein uS3 family. In terms of assembly, part of the 30S ribosomal subunit. Forms a tight complex with proteins S10 and S14.

Its function is as follows. Binds the lower part of the 30S subunit head. Binds mRNA in the 70S ribosome, positioning it for translation. The chain is Small ribosomal subunit protein uS3 from Exiguobacterium sp. (strain ATCC BAA-1283 / AT1b).